A 277-amino-acid polypeptide reads, in one-letter code: Thymidylate synthase (277 aa).

Arg-21 contacts dUMP. A (6R)-5,10-methylene-5,6,7,8-tetrahydrofolate-binding site is contributed by His-51. 126-127 provides a ligand contact to dUMP; that stretch reads RR. Cys-159 acts as the Nucleophile in catalysis. DUMP-binding positions include 179-182, Asn-190, and 220-222; these read RSAD and HLY. Residue Asp-182 coordinates (6R)-5,10-methylene-5,6,7,8-tetrahydrofolate. Ser-276 is a (6R)-5,10-methylene-5,6,7,8-tetrahydrofolate binding site.

Belongs to the thymidylate synthase family. Bacterial-type ThyA subfamily. As to quaternary structure, homodimer.

The protein resides in the cytoplasm. It carries out the reaction dUMP + (6R)-5,10-methylene-5,6,7,8-tetrahydrofolate = 7,8-dihydrofolate + dTMP. It functions in the pathway pyrimidine metabolism; dTTP biosynthesis. Its function is as follows. Catalyzes the reductive methylation of 2'-deoxyuridine-5'-monophosphate (dUMP) to 2'-deoxythymidine-5'-monophosphate (dTMP) while utilizing 5,10-methylenetetrahydrofolate (mTHF) as the methyl donor and reductant in the reaction, yielding dihydrofolate (DHF) as a by-product. This enzymatic reaction provides an intracellular de novo source of dTMP, an essential precursor for DNA biosynthesis. The chain is Thymidylate synthase from Saccharophagus degradans (strain 2-40 / ATCC 43961 / DSM 17024).